The following is a 534-amino-acid chain: Probable alpha-galactosidase A (534 aa).

The N-terminal stretch at 1–25 (MRLITRWIPLANALASTMPVQVVAS) is a signal peptide. An intrachain disulfide couples Cys47 to Cys79. Asn50, Asn88, Asn94, and Asn124 each carry an N-linked (GlcNAc...) asparagine glycan. A disulfide bridge connects residues Cys127 and Cys157. Asp155 serves as the catalytic Nucleophile. N-linked (GlcNAc...) asparagine glycosylation occurs at Asn204. Residue Asp213 is the Proton donor of the active site. Residues 413–534 (CSQVIPTGLI…GLPAGVHVAL (122 aa)) enclose the Ricin B-type lectin domain. Cys430 and Cys443 are disulfide-bonded. The N-linked (GlcNAc...) asparagine glycan is linked to Asn444. A disulfide bridge links Cys468 with Cys481.

This sequence belongs to the glycosyl hydrolase 27 family.

The protein localises to the secreted. It carries out the reaction Hydrolysis of terminal, non-reducing alpha-D-galactose residues in alpha-D-galactosides, including galactose oligosaccharides, galactomannans and galactolipids.. Functionally, hydrolyzes a variety of simple alpha-D-galactoside as well as more complex molecules such as oligosaccharides and polysaccharides. This Aspergillus oryzae (strain ATCC 42149 / RIB 40) (Yellow koji mold) protein is Probable alpha-galactosidase A (aglA).